We begin with the raw amino-acid sequence, 394 residues long: Phosphoglycerate kinase (394 aa).

Residues 21-23, arginine 36, 59-62, arginine 118, and arginine 151 contribute to the substrate site; these read DFN and HLGR. At serine 183 the chain carries Phosphoserine. ATP contacts are provided by lysine 201 and glycine 292. Residue threonine 299 is modified to Phosphothreonine. ATP is bound by residues glutamate 323 and 350-353; that span reads GGDS.

It belongs to the phosphoglycerate kinase family. Monomer.

It localises to the cytoplasm. The enzyme catalyses (2R)-3-phosphoglycerate + ATP = (2R)-3-phospho-glyceroyl phosphate + ADP. It functions in the pathway carbohydrate degradation; glycolysis; pyruvate from D-glyceraldehyde 3-phosphate: step 2/5. The chain is Phosphoglycerate kinase (pgk) from Priestia megaterium (strain DSM 319 / IMG 1521) (Bacillus megaterium).